The following is a 707-amino-acid chain: Dendrin (707 aa).

5 disordered regions span residues 1-22, 67-86, 94-195, 213-273, and 342-377; these read MLDG…DEES, QNRT…RRPW, ATNW…PWGG, AGTA…KKRL, and TEVA…GSEE. The stretch at 103–134 forms a coiled coil; that stretch reads AEVRAREQEKRKAASQEREAKETERKRRKAGG. Over residues 105 to 127 the composition is skewed to basic and acidic residues; that stretch reads VRAREQEKRKAASQEREAKETER. The interval 113-131 is nuclear localization; sequence RKAASQEREAKETERKRRK. The interval 186–236 is interaction with MAGI2; that stretch reads GVAWAGPWGGRRPGPPSYEAHLLLRGAAGTAPRRRWDRPPPYVAPPSYEGP. The tract at residues 340-434 is interaction with ACTN1; that stretch reads PVTEVALSGS…LEVWKVTRRA (95 aa). Over residues 359–369 the composition is skewed to basic residues; it reads PRSRQHLRGSR. Phosphoserine is present on S387. Disordered stretches follow at residues 389–421 and 517–707; these read KKPP…EGTE and RVLN…GKRE. The interaction with CD2AP and NPHS1 stretch occupies residues 406–707; it reads GGTGWKESLG…TRKTPQGKRE (302 aa). Composition is skewed to basic and acidic residues over residues 524–544 and 692–707; these read EGRE…EERS and GLVR…GKRE.

In terms of assembly, forms a ternary complex with MAGI2 and SH3KBP1; recruits DDN to the cytoplasm. Interacts with MAGI1. Interacts with ACTN1 and may interact with WWC1. Interacts with the podocyte slit diaphragm proteins CD2AP, NPHS1 and NPHS2; the interaction with CD2AP and NPHS1 is direct. Specifically expressed in forebrain structures, particularly in neocortex, olfactory bulb, hippocampus, caudate-putamen, and limbic system (at protein level). Also detected in spleen, liver, kidney and placenta (at protein level).

The protein resides in the cell projection. It localises to the dendritic spine membrane. The protein localises to the cytoplasm. It is found in the endoplasmic reticulum membrane. Its subcellular location is the perikaryon. The protein resides in the nucleus. Its function is as follows. Promotes apoptosis of kidney glomerular podocytes. Podocytes are highly specialized cells essential to the ultrafiltration of blood, resulting in the extraction of urine and the retention of protein. The protein is Dendrin (Ddn) of Rattus norvegicus (Rat).